The primary structure comprises 248 residues: 2,3-bisphosphoglycerate-dependent phosphoglycerate mutase (248 aa).

Substrate contacts are provided by residues Arg-8 to Asn-15, Thr-21 to Gly-22, Arg-60, Glu-87 to Tyr-90, Lys-98, Arg-114 to Arg-115, and Gly-183 to Asn-184. Catalysis depends on His-9, which acts as the Tele-phosphohistidine intermediate. Glu-87 (proton donor/acceptor) is an active-site residue.

This sequence belongs to the phosphoglycerate mutase family. BPG-dependent PGAM subfamily.

It catalyses the reaction (2R)-2-phosphoglycerate = (2R)-3-phosphoglycerate. The protein operates within carbohydrate degradation; glycolysis; pyruvate from D-glyceraldehyde 3-phosphate: step 3/5. Functionally, catalyzes the interconversion of 2-phosphoglycerate and 3-phosphoglycerate. The chain is 2,3-bisphosphoglycerate-dependent phosphoglycerate mutase from Coprothermobacter proteolyticus (strain ATCC 35245 / DSM 5265 / OCM 4 / BT).